We begin with the raw amino-acid sequence, 218 residues long: Elongation factor Ts (218 aa).

An involved in Mg(2+) ion dislocation from EF-Tu region spans residues 82–85 (TDFV).

The protein belongs to the EF-Ts family.

The protein resides in the cytoplasm. In terms of biological role, associates with the EF-Tu.GDP complex and induces the exchange of GDP to GTP. It remains bound to the aminoacyl-tRNA.EF-Tu.GTP complex up to the GTP hydrolysis stage on the ribosome. This chain is Elongation factor Ts, found in Prochlorococcus marinus (strain AS9601).